Here is a 247-residue protein sequence, read N- to C-terminus: SDSLSFSFINFDKDERNVIAQGDARLVGNNILQLTRTDSNGSPVKSTVGRILYVAQVRLWEKSTNRVANFQSQFSFFLESPLSNPADGIAFFIAPPDTAIPSGSAGGLLGLFSPKTAQNESANQVLAVEFDTFYAQNSNTWDPNYPHIGIDVNSIKSAKTVRWERREGVTLNVLVTYNPSTRTIDVVATYPDGQRYDLSVVVDVTTVLPEWVRVGFSAASGEQFQTHNLESWSFTSTLLYTAQKENN.

A carbohydrate-binding residues include Asp-87 and Gly-107. Residue Asn-119 is glycosylated (N-linked (GlcNAc...) asparagine). 2 residues coordinate Mn(2+): Glu-129 and Asp-131. The Ca(2+) site is built by Asp-131 and Phe-133. 2 residues coordinate a carbohydrate: Ser-138 and Asn-139. Ca(2+)-binding residues include Asn-139 and Asp-142. Positions 142 and 147 each coordinate Mn(2+). 3 residues coordinate a carbohydrate: Gly-221, Glu-222, and Gln-223.

It belongs to the leguminous lectin family. Homodimer; non-covalently linked. Post-translationally, glycosylated.

Mannose-specific lectin. Also binds alpha-methyl-D-mannoside, D-glucose, N-acetyl-D-glucosamine and sucrose but not D-galactose, D-arabinose, D-fructose, D-xylose, lactose or glycoproteins fetiun, PSM and ovalbumin. Shows agglutinating activity towards rabbit erythrocytes. In Centrolobium microchaete (Canarywood tree), this protein is Mannose-specific lectin CML-2.